The primary structure comprises 277 residues: MSDGKLLSAFEEELRKAQSLEELKQKYEEAQKQIADGKVLKRLYKVYEKRQTELMLQQYRQIKAELEKRKKVKKKDKADIRVRVVKKWINSRLFSAEHYVALLQENQDGLSILFLRRAKLIENQGYLMLEVKKLRKAWVLTAEPILLERLKFPFGKKFVAVHFVLPNYPYTLQLKPDEKLKELAVKAINGPQIMSAMIRTKFFEALARVGSGPDLMMLIIGVVMGIGIGVAIGFGIANANLTHLLSQHVTNTTVTHTTTTTTSPSFTIPSNSSKGVS.

Residues 256–277 (HTTTTTTSPSFTIPSNSSKGVS) form a disordered region.

Functionally, this protein may be involved in virus assembly. Essential for virus function. This is an uncharacterized protein from Saccharolobus solfataricus (Sulfolobus solfataricus).